The following is a 142-amino-acid chain: MPNKALITGFWSKVKVDEVGAEALGRLLVVYPWTQRFFEHFGDLSSADAVLGNAKVKAHGKKVLDSFSNGVQHLDDLKGTFAELSELHCDKLHVDPENFRLLGNVLVIVLARHFGKEFTPELQAEFQKVVAGVASALAHRYH.

Positions Met-1–His-142 constitute a Globin domain. The heme b site is built by His-59 and His-88.

It belongs to the globin family. As to quaternary structure, heterotetramer of two alpha chains and two beta chains. As to expression, red blood cells.

Functionally, involved in oxygen transport from the lung to the various peripheral tissues. This is Hemoglobin subunit beta-C (HBBC) from Capra hircus (Goat).